The sequence spans 239 residues: Pyridoxine 5'-phosphate synthase (239 aa).

Residue Asn-7 participates in 3-amino-2-oxopropyl phosphate binding. 9–10 (DH) is a 1-deoxy-D-xylulose 5-phosphate binding site. Position 18 (Arg-18) interacts with 3-amino-2-oxopropyl phosphate. The active-site Proton acceptor is the His-43. Residues Arg-45 and His-50 each coordinate 1-deoxy-D-xylulose 5-phosphate. The active-site Proton acceptor is the Glu-70. Position 100 (Thr-100) interacts with 1-deoxy-D-xylulose 5-phosphate. The active-site Proton donor is the His-191. Residues Gly-192 and 213-214 (GH) each bind 3-amino-2-oxopropyl phosphate.

The protein belongs to the PNP synthase family. As to quaternary structure, homooctamer; tetramer of dimers.

The protein resides in the cytoplasm. It catalyses the reaction 3-amino-2-oxopropyl phosphate + 1-deoxy-D-xylulose 5-phosphate = pyridoxine 5'-phosphate + phosphate + 2 H2O + H(+). It participates in cofactor biosynthesis; pyridoxine 5'-phosphate biosynthesis; pyridoxine 5'-phosphate from D-erythrose 4-phosphate: step 5/5. Functionally, catalyzes the complicated ring closure reaction between the two acyclic compounds 1-deoxy-D-xylulose-5-phosphate (DXP) and 3-amino-2-oxopropyl phosphate (1-amino-acetone-3-phosphate or AAP) to form pyridoxine 5'-phosphate (PNP) and inorganic phosphate. This chain is Pyridoxine 5'-phosphate synthase, found in Geotalea daltonii (strain DSM 22248 / JCM 15807 / FRC-32) (Geobacter daltonii).